A 61-amino-acid polypeptide reads, in one-letter code: Photosystem II reaction center X protein (61 aa).

A helical membrane pass occupies residues 26-46 (IGSFIAAALLIVVPATAFLIF).

The protein belongs to the PsbX family. Type 2 subfamily. In terms of assembly, PSII consists of a core antenna complex that captures photons, and an electron transfer chain that converts photonic excitation into a charge separation. PSII forms dimeric complexes.

It localises to the cellular thylakoid membrane. Involved in the binding and/or turnover of quinones at the Q(B) site of Photosystem II. In Prochlorococcus marinus (strain AS9601), this protein is Photosystem II reaction center X protein.